The following is a 487-amino-acid chain: 2-succinylbenzoate--CoA ligase (487 aa).

Belongs to the ATP-dependent AMP-binding enzyme family. MenE subfamily.

It catalyses the reaction 2-succinylbenzoate + ATP + CoA = 2-succinylbenzoyl-CoA + AMP + diphosphate. It functions in the pathway quinol/quinone metabolism; 1,4-dihydroxy-2-naphthoate biosynthesis; 1,4-dihydroxy-2-naphthoate from chorismate: step 5/7. Its pathway is quinol/quinone metabolism; menaquinone biosynthesis. Its function is as follows. Converts 2-succinylbenzoate (OSB) to 2-succinylbenzoyl-CoA (OSB-CoA). This Bacillus velezensis (strain DSM 23117 / BGSC 10A6 / LMG 26770 / FZB42) (Bacillus amyloliquefaciens subsp. plantarum) protein is 2-succinylbenzoate--CoA ligase.